The sequence spans 427 residues: MAKTIQAIRGMNDCLPEISGTWQKVESVLRQVVASYGYQEIRTPIVESTDLFKRSIGEVTDIVEKEMYTFEDRNGDSLTLRPEGTASCVRAGNEHGLLYNQQQRLWYMGPMFRHERPQKGRYRQFHQFGVETYGMDGPDIDLEVILLSARFWKSFGIEQHVKLQINTLGSNEARAAYRDTLVAFLKERADQLDEDSLRRLETNPLRVLDSKNPDVQAAIADAPALIDHLDDESKAHFDTLCARLTQAGIEFEINPRLVRGLDYYNRTVFEWVTDSLGAQGTVCAGGRYDGLVEQLGGKATPAVGFAMGIERLVLLLTTLTEEGQDTSFADVYVTAMGDDAQPYAIEVSEALRNALPNIRIMMHCGGGNFKKQLKRADKTGARLALLLGSDEMQSREVGVKPLRDGQEQVTVSFDTLADKVAEMLSAK.

It belongs to the class-II aminoacyl-tRNA synthetase family. Homodimer.

The protein resides in the cytoplasm. It catalyses the reaction tRNA(His) + L-histidine + ATP = L-histidyl-tRNA(His) + AMP + diphosphate + H(+). The polypeptide is Histidine--tRNA ligase (Alteromonas mediterranea (strain DSM 17117 / CIP 110805 / LMG 28347 / Deep ecotype)).